A 203-amino-acid polypeptide reads, in one-letter code: Proteasome subunit beta 2 (203 aa).

Positions 1–9 (MGEEVQIGA) are cleaved as a propeptide — removed in mature form; by autocatalysis. Threonine 10 (nucleophile) is an active-site residue.

The protein belongs to the peptidase T1B family. As to quaternary structure, the 20S proteasome core is composed of 14 alpha and 14 beta subunits that assemble into four stacked heptameric rings, resulting in a barrel-shaped structure. The two inner rings, each composed of seven catalytic beta subunits, are sandwiched by two outer rings, each composed of seven alpha subunits. The catalytic chamber with the active sites is on the inside of the barrel. Has a gated structure, the ends of the cylinder being occluded by the N-termini of the alpha-subunits. Is capped at one or both ends by the proteasome regulatory ATPase, PAN.

The protein localises to the cytoplasm. It carries out the reaction Cleavage of peptide bonds with very broad specificity.. Its activity is regulated as follows. The formation of the proteasomal ATPase PAN-20S proteasome complex, via the docking of the C-termini of PAN into the intersubunit pockets in the alpha-rings, triggers opening of the gate for substrate entry. Interconversion between the open-gate and close-gate conformations leads to a dynamic regulation of the 20S proteasome proteolysis activity. In terms of biological role, component of the proteasome core, a large protease complex with broad specificity involved in protein degradation. The protein is Proteasome subunit beta 2 of Pyrobaculum arsenaticum (strain DSM 13514 / JCM 11321 / PZ6).